Reading from the N-terminus, the 25-residue chain is Hypotensin-2 (25 aa).

Residues 1–25 (AEIDFSGIPEDIIKEIKETNAKPPA) are disordered. Position 6 is a phosphoserine (Ser6). Over residues 11 to 25 (DIIKEIKETNAKPPA) the composition is skewed to basic and acidic residues.

The protein belongs to the non-disulfide-bridged peptide (NDBP) superfamily. Expressed by the venom gland.

It localises to the secreted. Its function is as follows. Agonist of the B2 bradykinin receptor (BDKRB2). Potentiates the hypotensive effect of bradykinin (BK) and induces a direct vasorelaxing effect, independently of BK, by endothelium- and nitric oxide (NO)-dependent mechanisms in rat aortic ring preparations. Does not inhibit the angiotensin-converting enzyme (ACE). Also exerts proangiogenic, antiinflammatory, and antifibrogenic activities. Does not inhibit the angiotensin-converting enzyme (ACE) but weakly increases its activity, and weakly inhibits neprilysin (NEP) in a non-competitive manner. Exerts intermediate cytotoxicity and pro-inflammatory effects on mouse macrophages, and increases the phagocytic activity of these murine cells. Presents weak hemolytic activity at physiological concentrations (micromolar range), and weak lactate dehydrogenase (LDH) release from mast cells. Does not induce mast cell degranulation, and antimicrobial effects. In vivo, causes intense pain (but no edema formation), when injected in mice hind paws. Also induces discomfort and anxiety in mice, as it moderately diminishes locomotion and moderately increases rearing behavior. The chain is Hypotensin-2 from Tityus serrulatus (Brazilian scorpion).